The chain runs to 267 residues: Cytochrome b (267 aa).

A run of 4 helical transmembrane segments spans residues Phe-33–Met-53, Trp-77–Val-98, Trp-113–Leu-133, and Phe-178–Leu-198. Heme b contacts are provided by His-83 and His-97. Heme b-binding residues include His-182 and His-196. His-201 lines the a ubiquinone pocket. The chain crosses the membrane as a helical span at residues Ile-226–Phe-246.

Belongs to the cytochrome b family. In terms of assembly, the cytochrome bc1 complex contains 11 subunits: 3 respiratory subunits (MT-CYB, CYC1 and UQCRFS1), 2 core proteins (UQCRC1 and UQCRC2) and 6 low-molecular weight proteins (UQCRH/QCR6, UQCRB/QCR7, UQCRQ/QCR8, UQCR10/QCR9, UQCR11/QCR10 and a cleavage product of UQCRFS1). This cytochrome bc1 complex then forms a dimer. Heme b is required as a cofactor.

The protein localises to the mitochondrion inner membrane. Functionally, component of the ubiquinol-cytochrome c reductase complex (complex III or cytochrome b-c1 complex) that is part of the mitochondrial respiratory chain. The b-c1 complex mediates electron transfer from ubiquinol to cytochrome c. Contributes to the generation of a proton gradient across the mitochondrial membrane that is then used for ATP synthesis. This is Cytochrome b (MT-CYB) from Abrothrix olivaceus (Olive grass mouse).